Reading from the N-terminus, the 201-residue chain is Holliday junction branch migration complex subunit RuvA (201 aa).

The tract at residues 1–64 (MYAYIRGKLT…EDAQLLYGFI (64 aa)) is domain I. The segment at 65 to 143 (NEEEKDMFLS…ITRETTETLL (79 aa)) is domain II. Positions 144-150 (SMNEENS) are flexible linker. The segment at 151–201 (NSENLVKEALLALEALGYSKREISKVEKVLNKSTFDSVDEAVKLGLKTLVS) is domain III.

It belongs to the RuvA family. As to quaternary structure, homotetramer. Forms an RuvA(8)-RuvB(12)-Holliday junction (HJ) complex. HJ DNA is sandwiched between 2 RuvA tetramers; dsDNA enters through RuvA and exits via RuvB. An RuvB hexamer assembles on each DNA strand where it exits the tetramer. Each RuvB hexamer is contacted by two RuvA subunits (via domain III) on 2 adjacent RuvB subunits; this complex drives branch migration. In the full resolvosome a probable DNA-RuvA(4)-RuvB(12)-RuvC(2) complex forms which resolves the HJ.

It localises to the cytoplasm. The RuvA-RuvB-RuvC complex processes Holliday junction (HJ) DNA during genetic recombination and DNA repair, while the RuvA-RuvB complex plays an important role in the rescue of blocked DNA replication forks via replication fork reversal (RFR). RuvA specifically binds to HJ cruciform DNA, conferring on it an open structure. The RuvB hexamer acts as an ATP-dependent pump, pulling dsDNA into and through the RuvAB complex. HJ branch migration allows RuvC to scan DNA until it finds its consensus sequence, where it cleaves and resolves the cruciform DNA. In Staphylococcus haemolyticus (strain JCSC1435), this protein is Holliday junction branch migration complex subunit RuvA.